Reading from the N-terminus, the 257-residue chain is 5'-nucleotidase SurE (257 aa).

A divalent metal cation contacts are provided by Asp-8, Asp-9, Ser-40, and Asn-93.

Belongs to the SurE nucleotidase family. Requires a divalent metal cation as cofactor.

It is found in the cytoplasm. It catalyses the reaction a ribonucleoside 5'-phosphate + H2O = a ribonucleoside + phosphate. Functionally, nucleotidase that shows phosphatase activity on nucleoside 5'-monophosphates. This Phenylobacterium zucineum (strain HLK1) protein is 5'-nucleotidase SurE.